A 146-amino-acid chain; its full sequence is Anti-sigma F factor (146 aa).

The protein belongs to the anti-sigma-factor family.

It carries out the reaction L-seryl-[protein] + ATP = O-phospho-L-seryl-[protein] + ADP + H(+). The catalysed reaction is L-threonyl-[protein] + ATP = O-phospho-L-threonyl-[protein] + ADP + H(+). Binds to sigma F and blocks its ability to form an RNA polymerase holoenzyme (E-sigma F). Phosphorylates SpoIIAA on a serine residue. This phosphorylation may enable SpoIIAA to act as an anti-anti-sigma factor that counteracts SpoIIAB and thus releases sigma F from inhibition. The polypeptide is Anti-sigma F factor (Bacillus licheniformis (strain ATCC 14580 / DSM 13 / JCM 2505 / CCUG 7422 / NBRC 12200 / NCIMB 9375 / NCTC 10341 / NRRL NRS-1264 / Gibson 46)).